A 267-amino-acid polypeptide reads, in one-letter code: Diaminopimelate epimerase (267 aa).

Substrate-binding residues include Asn-15 and Asn-66. Residue Cys-75 is the Proton donor of the active site. Substrate is bound by residues 76–77 (GN), Asn-150, Asn-183, and 201–202 (ER). Cys-210 serves as the catalytic Proton acceptor. Residue 211 to 212 (GT) coordinates substrate.

This sequence belongs to the diaminopimelate epimerase family. As to quaternary structure, homodimer.

It localises to the cytoplasm. It carries out the reaction (2S,6S)-2,6-diaminopimelate = meso-2,6-diaminopimelate. It participates in amino-acid biosynthesis; L-lysine biosynthesis via DAP pathway; DL-2,6-diaminopimelate from LL-2,6-diaminopimelate: step 1/1. Its function is as follows. Catalyzes the stereoinversion of LL-2,6-diaminopimelate (L,L-DAP) to meso-diaminopimelate (meso-DAP), a precursor of L-lysine and an essential component of the bacterial peptidoglycan. The protein is Diaminopimelate epimerase of Bacteroides thetaiotaomicron (strain ATCC 29148 / DSM 2079 / JCM 5827 / CCUG 10774 / NCTC 10582 / VPI-5482 / E50).